A 127-amino-acid chain; its full sequence is 13 kDa ribonucleoprotein-associated protein (127 aa).

It belongs to the eukaryotic ribosomal protein eL8 family. Component of the U3 snoRNP particle. Binds to the C'/D and B/C motifs in U3 snoRNA. Component of the 25S U4/U6.U5 tri-snRNP particle, a subcomplex of the spliceosome. Binds to the 5' stem-loop of U4 snRNA.

Its subcellular location is the nucleus. The protein localises to the nucleolus. Common component of the spliceosome and rRNA processing machinery. In association with the spliceosomal U4/U6.U5 tri-snRNP particle, required for splicing of pre-mRNA. In association with box C/D snoRNPs, required for processing of pre-ribosomal RNA (rRNA) and site-specific 2'-O-methylation of substrate RNAs. Essential for the accumulation and stability of U4 snRNA, U6 snRNA, and box C/D snoRNAs. The protein is 13 kDa ribonucleoprotein-associated protein (SNU13) of Cryptococcus neoformans var. neoformans serotype D (strain B-3501A) (Filobasidiella neoformans).